Here is a 479-residue protein sequence, read N- to C-terminus: Aspartyl/glutamyl-tRNA(Asn/Gln) amidotransferase subunit B (479 aa).

This sequence belongs to the GatB/GatE family. GatB subfamily. In terms of assembly, heterotrimer of A, B and C subunits.

The catalysed reaction is L-glutamyl-tRNA(Gln) + L-glutamine + ATP + H2O = L-glutaminyl-tRNA(Gln) + L-glutamate + ADP + phosphate + H(+). The enzyme catalyses L-aspartyl-tRNA(Asn) + L-glutamine + ATP + H2O = L-asparaginyl-tRNA(Asn) + L-glutamate + ADP + phosphate + 2 H(+). Its function is as follows. Allows the formation of correctly charged Asn-tRNA(Asn) or Gln-tRNA(Gln) through the transamidation of misacylated Asp-tRNA(Asn) or Glu-tRNA(Gln) in organisms which lack either or both of asparaginyl-tRNA or glutaminyl-tRNA synthetases. The reaction takes place in the presence of glutamine and ATP through an activated phospho-Asp-tRNA(Asn) or phospho-Glu-tRNA(Gln). This chain is Aspartyl/glutamyl-tRNA(Asn/Gln) amidotransferase subunit B, found in Streptococcus pyogenes serotype M6 (strain ATCC BAA-946 / MGAS10394).